A 302-amino-acid polypeptide reads, in one-letter code: Protoheme IX farnesyltransferase (302 aa).

9 helical membrane passes run 27–47 (VLTL…QSIH), 48–68 (PVLG…AGAL), 97–117 (SALH…GLAL), 119–139 (VLAA…YTIW), 148–168 (IVIG…AATG), 176–196 (LLFA…ALFI), 219–239 (IQIM…WAMG), 240–260 (LTGA…LLLA), and 280–300 (LFGF…ADKV).

This sequence belongs to the UbiA prenyltransferase family. Protoheme IX farnesyltransferase subfamily.

It localises to the cell inner membrane. The enzyme catalyses heme b + (2E,6E)-farnesyl diphosphate + H2O = Fe(II)-heme o + diphosphate. Its pathway is porphyrin-containing compound metabolism; heme O biosynthesis; heme O from protoheme: step 1/1. Its function is as follows. Converts heme B (protoheme IX) to heme O by substitution of the vinyl group on carbon 2 of heme B porphyrin ring with a hydroxyethyl farnesyl side group. This Rhizorhabdus wittichii (strain DSM 6014 / CCUG 31198 / JCM 15750 / NBRC 105917 / EY 4224 / RW1) (Sphingomonas wittichii) protein is Protoheme IX farnesyltransferase.